A 66-amino-acid polypeptide reads, in one-letter code: Large ribosomal subunit protein bL33c (66 aa).

The protein belongs to the bacterial ribosomal protein bL33 family.

It localises to the plastid. Its subcellular location is the chloroplast. This chain is Large ribosomal subunit protein bL33c, found in Coffea arabica (Arabian coffee).